A 352-amino-acid chain; its full sequence is Outer membrane protein assembly factor BamC (352 aa).

The signal sequence occupies residues 1–24; it reads MAISLQKSTVVKVVGVSLVMLLAA. The N-palmitoyl cysteine moiety is linked to residue Cys25. Cys25 carries S-diacylglycerol cysteine lipidation.

This sequence belongs to the BamC family. As to quaternary structure, part of the Bam complex, which is composed of the outer membrane protein BamA, and four lipoproteins BamB, BamC, BamD and BamE.

The protein resides in the cell outer membrane. Functionally, part of the outer membrane protein assembly complex, which is involved in assembly and insertion of beta-barrel proteins into the outer membrane. The sequence is that of Outer membrane protein assembly factor BamC from Yersinia pestis.